The chain runs to 261 residues: Cytochrome c oxidase subunit 3 (261 aa).

Topologically, residues 1-15 are mitochondrial matrix; sequence MAHQAHSYHMVDPSP. The chain crosses the membrane as a helical span at residues 16-34; that stretch reads WPIFGAITALLTTSGLIMW. Topologically, residues 35 to 40 are mitochondrial intermembrane; sequence FHYNSI. A helical transmembrane segment spans residues 41–66; it reads ALLTAGLLSMLLVMIQWWRDVVREST. Residues 67–72 lie on the Mitochondrial matrix side of the membrane; sequence FQGHHT. Residues 73 to 105 traverse the membrane as a helical segment; the sequence is PTVQKGLRYGMILFITSEAFFFLGFFWAFFHSS. At 106–128 the chain is on the mitochondrial intermembrane side; the sequence is LAPTPELGGQWPPTGIKPLNPLE. The helical transmembrane segment at 129-152 threads the bilayer; it reads VPLLNTAILLASGVTVTWAHHSIT. Topologically, residues 153-155 are mitochondrial matrix; that stretch reads EGN. A helical membrane pass occupies residues 156–183; that stretch reads RKQAIHALTLTILLGFYFTALQAMEYHE. The Mitochondrial intermembrane portion of the chain corresponds to 184 to 190; it reads ASFSIAD. A helical membrane pass occupies residues 191 to 223; the sequence is SVYGSTFFVATGFHGLHVIIGSSFLTICLLRLI. Over 224-232 the chain is Mitochondrial matrix; that stretch reads KFHFTSNHH. A helical transmembrane segment spans residues 233-256; that stretch reads FGFEAAAWYWHFVDIIWLFLYMSM. The Mitochondrial intermembrane segment spans residues 257–261; that stretch reads YWWGS.

The protein belongs to the cytochrome c oxidase subunit 3 family. In terms of assembly, component of the cytochrome c oxidase (complex IV, CIV), a multisubunit enzyme composed of 14 subunits. The complex is composed of a catalytic core of 3 subunits MT-CO1, MT-CO2 and MT-CO3, encoded in the mitochondrial DNA, and 11 supernumerary subunits COX4I, COX5A, COX5B, COX6A, COX6B, COX6C, COX7A, COX7B, COX7C, COX8 and NDUFA4, which are encoded in the nuclear genome. The complex exists as a monomer or a dimer and forms supercomplexes (SCs) in the inner mitochondrial membrane with NADH-ubiquinone oxidoreductase (complex I, CI) and ubiquinol-cytochrome c oxidoreductase (cytochrome b-c1 complex, complex III, CIII), resulting in different assemblies (supercomplex SCI(1)III(2)IV(1) and megacomplex MCI(2)III(2)IV(2)).

The protein resides in the mitochondrion inner membrane. The enzyme catalyses 4 Fe(II)-[cytochrome c] + O2 + 8 H(+)(in) = 4 Fe(III)-[cytochrome c] + 2 H2O + 4 H(+)(out). Its function is as follows. Component of the cytochrome c oxidase, the last enzyme in the mitochondrial electron transport chain which drives oxidative phosphorylation. The respiratory chain contains 3 multisubunit complexes succinate dehydrogenase (complex II, CII), ubiquinol-cytochrome c oxidoreductase (cytochrome b-c1 complex, complex III, CIII) and cytochrome c oxidase (complex IV, CIV), that cooperate to transfer electrons derived from NADH and succinate to molecular oxygen, creating an electrochemical gradient over the inner membrane that drives transmembrane transport and the ATP synthase. Cytochrome c oxidase is the component of the respiratory chain that catalyzes the reduction of oxygen to water. Electrons originating from reduced cytochrome c in the intermembrane space (IMS) are transferred via the dinuclear copper A center (CU(A)) of subunit 2 and heme A of subunit 1 to the active site in subunit 1, a binuclear center (BNC) formed by heme A3 and copper B (CU(B)). The BNC reduces molecular oxygen to 2 water molecules using 4 electrons from cytochrome c in the IMS and 4 protons from the mitochondrial matrix. The polypeptide is Cytochrome c oxidase subunit 3 (MT-CO3) (Coturnix japonica (Japanese quail)).